The chain runs to 629 residues: Arginyl-tRNA--protein transferase 1 (629 aa).

Disordered regions lie at residues 274 to 298 (QNNSNKNSTTTATTATTTTTTTNEP) and 353 to 405 (PDES…ITKE). The span at 282 to 295 (TTTATTATTTTTTT) shows a compositional bias: low complexity. Positions 356–396 (SYDDYVYDGKDDDDDDDDKDEKEDDEDEDQEDDEDEDDGNN) are enriched in acidic residues.

This sequence belongs to the R-transferase family.

It carries out the reaction an N-terminal L-alpha-aminoacyl-[protein] + L-arginyl-tRNA(Arg) = an N-terminal L-arginyl-L-aminoacyl-[protein] + tRNA(Arg) + H(+). In terms of biological role, involved in the post-translational conjugation of arginine to the N-terminal aspartate or glutamate of a protein. This arginylation is required for degradation of the protein via the ubiquitin pathway. Does not arginylate cysteine residues. The polypeptide is Arginyl-tRNA--protein transferase 1 (ate1) (Dictyostelium discoideum (Social amoeba)).